The sequence spans 341 residues: Allergen Mag (341 aa).

The polypeptide is Allergen Mag (MAG) (Dermatophagoides farinae (American house dust mite)).